We begin with the raw amino-acid sequence, 511 residues long: Adenosine deaminase 2 (511 aa).

The N-terminal stretch at 1 to 29 (MLVDGPSEWPALRFLLLAVAMSFFGSALS) is a signal peptide. The segment at 30 to 100 (IDETRAHLLL…HLIERSQVFN (71 aa)) is dimerization. Zn(2+) contacts are provided by H112 and H114. D115 serves as a coordination point for substrate. N127 is a glycosylation site (N-linked (GlcNAc...) asparagine). A PRB domain region spans residues 127 to 185 (NVTYRPHCHICFTPKGIMQFRFAHPTPRTSEKCSKWILLEDYRKRVQNVTEFDDSLLRN). An intrachain disulfide couples C137 to C159. Residues N174 and N185 are each glycosylated (N-linked (GlcNAc...) asparagine). Residues 204-211 (WSKFETIF), H293, and G326 contribute to the substrate site. Residue H356 participates in Zn(2+) binding. Catalysis depends on E359, which acts as the Proton donor. N378 carries N-linked (GlcNAc...) asparagine glycosylation. H384 acts as the Proton acceptor in catalysis. D441 contributes to the Zn(2+) binding site. D442 lines the substrate pocket.

This sequence belongs to the metallo-dependent hydrolases superfamily. Adenosine and AMP deaminases family. ADGF subfamily. Homodimer. Interacts with adenosine receptors. Binds heparin. It depends on Zn(2+) as a cofactor.

Its subcellular location is the secreted. It catalyses the reaction adenosine + H2O + H(+) = inosine + NH4(+). Functionally, adenosine deaminase that may contribute to the degradation of extracellular adenosine, a signaling molecule that controls a variety of cellular responses. Requires elevated adenosine levels for optimal enzyme activity. Binds to cell surfaces via proteoglycans and may play a role in the regulation of cell proliferation and differentiation, independently of its enzyme activity. The chain is Adenosine deaminase 2 from Pongo abelii (Sumatran orangutan).